Consider the following 312-residue polypeptide: MEESSRILVVGGTGYIGRRIVKASIALGHPTFILFRKEVVSDVEKVEMLLSFKKNGAKLLEASFDDHESLVDAVKQVDVVISAVAGNHMRHHILQQLKLVEAIKEAGNIKRFVPSEFGMDPGLMDHAMAPGNIVFIDKIKVREAIEAAAIPHTYISANIFAGYLVGGLAQLGRVMPPSDKVFLYGDGNVKAVWIDEEDVGIYTIKAIDDPRTLNKTVYIRPPLNVLSQKEVVEKWEKLSRKSLDKIYMSVEDFLAGMEGQSYGEKIGISHFYQMFYKGDLYNFEIGPNGVEASQLYPGVKYTTVDSYMERYL.

NADP(+) contacts are provided by residues 11 to 17 (GGTGYIG), arginine 36, and lysine 45. Lysine 138 (proton acceptor) is an active-site residue. An NADP(+)-binding site is contributed by arginine 142. Histidine 270 contacts substrate.

It belongs to the NmrA-type oxidoreductase family. Isoflavone reductase subfamily. Dimer.

The enzyme catalyses (+)-lariciresinol + NADP(+) = (+)-pinoresinol + NADPH + H(+). It carries out the reaction (-)-secoisolariciresinol + NADP(+) = (+)-lariciresinol + NADPH + H(+). In terms of biological role, reductase involved in lignan biosynthesis. Catalyzes the enantioselective sequential conversion of (+)-pinoresinol into (+)-lariciresinol and of (+)-lariciresinol into (-)-secoisolariciresinol. Abstracts the 4R-hydride from the NADPH cofactor during catalysis. The chain is Bifunctional pinoresinol-lariciresinol reductase from Thuja plicata (Western red-cedar).